A 226-amino-acid chain; its full sequence is Ornithine decarboxylase antizyme (226 aa).

This sequence belongs to the ODC antizyme family. In terms of assembly, interacts with ODC and thereby sterically blocks ODC homodimerization.

Functionally, ornithine decarboxylase (ODC) antizyme protein that negatively regulates ODC activity and intracellular polyamine biosynthesis in response to increased intracellular polyamine levels. Binds to ODC monomers, inhibiting the assembly of the functional ODC homodimer, and targets the monomers for ubiquitin-independent proteolytic destruction by the 26S proteasome. This Schizosaccharomyces japonicus (Fission yeast) protein is Ornithine decarboxylase antizyme (spa1).